The primary structure comprises 227 residues: MSLLLTVFLIVFVTQLISWIGQNVLLEWAYNLYLRLSRNSLAARQRSLKTEILNNKTELLKTSAQDQFAKWAKLRRSVDKGLAELEKLNSEIATAKSSFSTKFNAVIWALTSGVNLVIGWWYGRKAVFYLPEGWMGPLTWWFSFPFAPRGSVSVGVWSFACKRVLLVLERMVKELFFAETQAKEVPVGFSPSSSSSSTPNPMSKASSGSPSPRRRTTVTVESEDEKS.

The Lumenal portion of the chain corresponds to 1 to 3 (MSL). Residues 4-23 (LLTVFLIVFVTQLISWIGQN) form a helical membrane-spanning segment. Residues 24–107 (VLLEWAYNLY…SFSTKFNAVI (84 aa)) are Cytoplasmic-facing. The stretch at 72–96 (AKLRRSVDKGLAELEKLNSEIATAK) forms a coiled coil. Residues 108–128 (WALTSGVNLVIGWWYGRKAVF) form a helical membrane-spanning segment. Residues 129 to 151 (YLPEGWMGPLTWWFSFPFAPRGS) are Lumenal-facing. A helical membrane pass occupies residues 152-168 (VSVGVWSFACKRVLLVL). At 169–227 (ERMVKELFFAETQAKEVPVGFSPSSSSSSTPNPMSKASSGSPSPRRRTTVTVESEDEKS) the chain is on the cytoplasmic side. The segment at 184 to 227 (EVPVGFSPSSSSSSTPNPMSKASSGSPSPRRRTTVTVESEDEKS) is disordered. Low complexity predominate over residues 190-211 (SPSSSSSSTPNPMSKASSGSPS).

It belongs to the WRB/GET1 family. In terms of assembly, interacts with GET3.

It localises to the endoplasmic reticulum membrane. In terms of biological role, required for the post-translational delivery of tail-anchored (TA) proteins to the endoplasmic reticulum. Acts as a membrane receptor for soluble GET3, which recognizes and selectively binds the transmembrane domain of TA proteins in the cytosol. The polypeptide is Protein GET1 (Coprinopsis cinerea (strain Okayama-7 / 130 / ATCC MYA-4618 / FGSC 9003) (Inky cap fungus)).